The sequence spans 145 residues: Ribonuclease VapC48 (145 aa).

Positions 6 and 109 each coordinate Mg(2+). Residues 15–141 (HRASPFHDKA…RKFEGIRIRD (127 aa)) form the PINc domain.

It belongs to the PINc/VapC protein family. The cofactor is Mg(2+).

Functionally, toxic component of a type II toxin-antitoxin (TA) system. An RNase. Its cognate antitoxin is VapB48. This Mycobacterium tuberculosis (strain CDC 1551 / Oshkosh) protein is Ribonuclease VapC48.